Reading from the N-terminus, the 446-residue chain is Calcium-binding and coiled-coil domain-containing protein 2 (446 aa).

Residues Ile-133–Val-136 carry the CLIR motif. Positions Thr-137–Met-349 form a coiled coil. Positions Asp-203–Glu-206 match the LIR-like motif. An interaction with LGALS8 region spans residues Asn-371–Ser-381. The interval Lys-395–Leu-446 is interaction with MYO6. The UBZ1-type zinc finger occupies Cys-419–His-444. The Zn(2+) site is built by Cys-422, Cys-425, His-440, and His-444. Phosphoserine is present on Ser-445.

It belongs to the CALCOCO family. In terms of assembly, dimer. Part of a complex consisting of CALCOCO2, TAX1BP1 and MYO6. Interacts with MYO6. Interacts with GEMIN4. Interacts with ATG8 family members MAP1LC3A, MAP1LC3B, GABARAP, GABARAPL1 and GABARAPL2. Interacts with ATG8 family member MAP1LC3C. Interacts with LGALS8. Interacts with TOM1; the interaction is indirect and is mediated by MYO6, which acts as a bridge between TOM1 and CALCOCO2. Interacts with AZI2.

The protein localises to the cytoplasm. The protein resides in the perinuclear region. It localises to the cytoskeleton. It is found in the cytoplasmic vesicle. Its subcellular location is the autophagosome membrane. Functionally, xenophagy-specific receptor required for autophagy-mediated intracellular bacteria degradation. Acts as an effector protein of galectin-sensed membrane damage that restricts the proliferation of infecting pathogens upon entry into the cytosol by targeting LGALS8-associated bacteria for autophagy. Initially orchestrates bacteria targeting to autophagosomes and subsequently ensures pathogen degradation by regulating pathogen-containing autophagosome maturation. Bacteria targeting to autophagosomes relies on its interaction with MAP1LC3A, MAP1LC3B and/or GABARAPL2, whereas regulation of pathogen-containing autophagosome maturation requires the interaction with MAP3LC3C. May play a role in ruffle formation and actin cytoskeleton organization and seems to negatively regulate constitutive secretion. In Pongo abelii (Sumatran orangutan), this protein is Calcium-binding and coiled-coil domain-containing protein 2.